The primary structure comprises 876 residues: Alanine--tRNA ligase (876 aa).

Zn(2+)-binding residues include His-564, His-568, Cys-666, and His-670.

The protein belongs to the class-II aminoacyl-tRNA synthetase family. It depends on Zn(2+) as a cofactor.

Its subcellular location is the cytoplasm. The catalysed reaction is tRNA(Ala) + L-alanine + ATP = L-alanyl-tRNA(Ala) + AMP + diphosphate. Its function is as follows. Catalyzes the attachment of alanine to tRNA(Ala) in a two-step reaction: alanine is first activated by ATP to form Ala-AMP and then transferred to the acceptor end of tRNA(Ala). Also edits incorrectly charged Ser-tRNA(Ala) and Gly-tRNA(Ala) via its editing domain. This chain is Alanine--tRNA ligase, found in Colwellia psychrerythraea (strain 34H / ATCC BAA-681) (Vibrio psychroerythus).